A 477-amino-acid chain; its full sequence is Bifunctional protein HldE (477 aa).

Residues 1–318 (MKVTLPEFER…ENAVRGRADT (318 aa)) are ribokinase. K179 is modified (N6-acetyllysine). 195 to 198 (NLSE) provides a ligand contact to ATP. D264 is a catalytic residue. The interval 344–477 (MTNGVFDILH…IKKIQQDKKG (134 aa)) is cytidylyltransferase.

The protein in the N-terminal section; belongs to the carbohydrate kinase PfkB family. It in the C-terminal section; belongs to the cytidylyltransferase family. As to quaternary structure, homodimer.

The enzyme catalyses D-glycero-beta-D-manno-heptose 7-phosphate + ATP = D-glycero-beta-D-manno-heptose 1,7-bisphosphate + ADP + H(+). It catalyses the reaction D-glycero-beta-D-manno-heptose 1-phosphate + ATP + H(+) = ADP-D-glycero-beta-D-manno-heptose + diphosphate. The protein operates within nucleotide-sugar biosynthesis; ADP-L-glycero-beta-D-manno-heptose biosynthesis; ADP-L-glycero-beta-D-manno-heptose from D-glycero-beta-D-manno-heptose 7-phosphate: step 1/4. It functions in the pathway nucleotide-sugar biosynthesis; ADP-L-glycero-beta-D-manno-heptose biosynthesis; ADP-L-glycero-beta-D-manno-heptose from D-glycero-beta-D-manno-heptose 7-phosphate: step 3/4. It participates in bacterial outer membrane biogenesis; LPS core biosynthesis. Functionally, catalyzes the phosphorylation of D-glycero-D-manno-heptose 7-phosphate at the C-1 position to selectively form D-glycero-beta-D-manno-heptose-1,7-bisphosphate. Its function is as follows. Catalyzes the ADP transfer from ATP to D-glycero-beta-D-manno-heptose 1-phosphate, yielding ADP-D-glycero-beta-D-manno-heptose. This chain is Bifunctional protein HldE, found in Shigella flexneri.